The sequence spans 82 residues: Sulfur carrier protein TusA (82 aa).

Residue Cys19 is the Cysteine persulfide intermediate of the active site.

Belongs to the sulfur carrier protein TusA family.

Its subcellular location is the cytoplasm. Sulfur carrier protein which probably makes part of a sulfur-relay system. The chain is Sulfur carrier protein TusA from Photobacterium profundum (strain SS9).